The sequence spans 209 residues: Small ribosomal subunit protein uS3 (209 aa).

The region spanning 17–86 (IDEYLEKELR…NPQIEVEEIK (70 aa)) is the KH type-2 domain.

It belongs to the universal ribosomal protein uS3 family. As to quaternary structure, part of the 30S ribosomal subunit.

Binds the lower part of the 30S subunit head. In Thermococcus gammatolerans (strain DSM 15229 / JCM 11827 / EJ3), this protein is Small ribosomal subunit protein uS3.